The following is a 509-amino-acid chain: 2,3-bisphosphoglycerate-independent phosphoglycerate mutase (509 aa).

Aspartate 11 contacts Mn(2+). The residue at position 35 (tyrosine 35) is a Phosphotyrosine. Serine 61 lines the Mn(2+) pocket. Catalysis depends on serine 61, which acts as the Phosphoserine intermediate. Substrate contacts are provided by residues histidine 122, 152–153 (RD), arginine 184, arginine 190, 260–263 (RPDR), and lysine 335. Mn(2+) is bound by residues aspartate 402, histidine 406, aspartate 443, histidine 444, and histidine 461.

Belongs to the BPG-independent phosphoglycerate mutase family. As to quaternary structure, monomer. Mn(2+) is required as a cofactor.

The enzyme catalyses (2R)-2-phosphoglycerate = (2R)-3-phosphoglycerate. The protein operates within carbohydrate degradation; glycolysis; pyruvate from D-glyceraldehyde 3-phosphate: step 3/5. Its function is as follows. Essential for rapid growth and for sporulation. Catalyzes the interconversion of 2-phosphoglycerate and 3-phosphoglycerate. The chain is 2,3-bisphosphoglycerate-independent phosphoglycerate mutase from Bacillus cereus (strain ATCC 10987 / NRS 248).